We begin with the raw amino-acid sequence, 310 residues long: UDP-N-acetylenolpyruvoylglucosamine reductase (310 aa).

The FAD-binding PCMH-type domain occupies 27-192; that stretch reads KIGGKARYIV…LKATFRLQYA (166 aa). Arg171 is a catalytic residue. Residue Ser223 is the Proton donor of the active site. Glu293 is an active-site residue.

This sequence belongs to the MurB family. FAD serves as cofactor.

It is found in the cytoplasm. It carries out the reaction UDP-N-acetyl-alpha-D-muramate + NADP(+) = UDP-N-acetyl-3-O-(1-carboxyvinyl)-alpha-D-glucosamine + NADPH + H(+). Its pathway is cell wall biogenesis; peptidoglycan biosynthesis. In terms of biological role, cell wall formation. The polypeptide is UDP-N-acetylenolpyruvoylglucosamine reductase (Caldicellulosiruptor saccharolyticus (strain ATCC 43494 / DSM 8903 / Tp8T 6331)).